The primary structure comprises 31 residues: MNNYTYKVNFNSISGVRHARIKCPIYTKNTF.

Functionally, may serve a regulatory role in expression of downstream gene argF; in an argL-argF-lacZ fusion mutation of the start codon to a stop codon in argL increases expression of beta-galactosidase. The sequence is that of Putative translational regulatory protein ArgL from Escherichia coli (strain K12).